The following is a 301-amino-acid chain: MERLTLPPGGAEAVDEYLEYRRIVGEDDGGKLFTPEEYEEYKKKVLPMRLQNRLFVSWRSPTGMDCKLVGPETLCFCTHRYKQHKTDFETIPQQRPIALPCRVSGCRCKAYHYVPLNGTQPIRCRCKHFADQHSAALGFTCNACSKCSGFHSCYTCACGQPAYAHDTVVETRQERLAQGKPVGRDVPYAAMGGLTGFSSLAEGYMRLDDSGIGAPSVEVLDSAVSAMDHPFLRAMHAPSTSSPQPLAGGNEVGPSTQLSSLRKPEEDDMAYFERQYQERIKLEKAAKQKGKVPPLPSTKPS.

The disordered stretch occupies residues Met235–Tyr271.

This sequence belongs to the FAM221 family.

The chain is Protein FAM221A (Fam221a) from Mus musculus (Mouse).